A 386-amino-acid polypeptide reads, in one-letter code: Succinate--CoA ligase [ADP-forming] subunit beta (386 aa).

An ATP-grasp domain is found at lysine 9–glutamate 244. ATP is bound by residues lysine 46, glycine 53–glycine 55, glutamate 99, serine 102, and glutamate 107. Residues asparagine 199 and aspartate 213 each contribute to the Mg(2+) site. Residues asparagine 264 and glycine 321–methionine 323 each bind substrate.

This sequence belongs to the succinate/malate CoA ligase beta subunit family. In terms of assembly, heterotetramer of two alpha and two beta subunits. The cofactor is Mg(2+).

The enzyme catalyses succinate + ATP + CoA = succinyl-CoA + ADP + phosphate. It carries out the reaction GTP + succinate + CoA = succinyl-CoA + GDP + phosphate. The protein operates within carbohydrate metabolism; tricarboxylic acid cycle; succinate from succinyl-CoA (ligase route): step 1/1. Functionally, succinyl-CoA synthetase functions in the citric acid cycle (TCA), coupling the hydrolysis of succinyl-CoA to the synthesis of either ATP or GTP and thus represents the only step of substrate-level phosphorylation in the TCA. The beta subunit provides nucleotide specificity of the enzyme and binds the substrate succinate, while the binding sites for coenzyme A and phosphate are found in the alpha subunit. The protein is Succinate--CoA ligase [ADP-forming] subunit beta of Wolbachia pipientis subsp. Culex pipiens (strain wPip).